A 233-amino-acid polypeptide reads, in one-letter code: uncharacterized protein (233 aa).

Belongs to the methyltransferase superfamily.

This is an uncharacterized protein from Bacillus subtilis (strain 168).